The sequence spans 416 residues: Probable glucan 1,3-beta-glucosidase A (416 aa).

Positions 1–21 (MLYNLSKAVLALSVLAASADA) are cleaved as a signal peptide. Glutamate 209 acts as the Proton donor in catalysis. Disulfide bonds link cysteine 290–cysteine 415 and cysteine 316–cysteine 341. Glutamate 308 serves as the catalytic Nucleophile.

This sequence belongs to the glycosyl hydrolase 5 (cellulase A) family. Monomer. It depends on Mn(2+) as a cofactor.

It is found in the secreted. It catalyses the reaction Successive hydrolysis of beta-D-glucose units from the non-reducing ends of (1-&gt;3)-beta-D-glucans, releasing alpha-glucose.. Functionally, beta-glucanases participate in the metabolism of beta-glucan, the main structural component of the cell wall. It could also function biosynthetically as a transglycosylase. In Aspergillus terreus (strain NIH 2624 / FGSC A1156), this protein is Probable glucan 1,3-beta-glucosidase A (exgA).